The primary structure comprises 335 residues: Adenosine deaminase (335 aa).

Residues His-12 and His-14 each contribute to the Zn(2+) site. Substrate is bound by residues His-14 and Asp-16. His-197 is a binding site for Zn(2+). Glu-200 serves as the catalytic Proton donor. Zn(2+) is bound at residue Asp-278.

It belongs to the metallo-dependent hydrolases superfamily. Adenosine and AMP deaminases family. Adenosine deaminase subfamily. The cofactor is Zn(2+).

It catalyses the reaction adenosine + H2O + H(+) = inosine + NH4(+). The enzyme catalyses 2'-deoxyadenosine + H2O + H(+) = 2'-deoxyinosine + NH4(+). In terms of biological role, catalyzes the hydrolytic deamination of adenosine and 2-deoxyadenosine. This chain is Adenosine deaminase, found in Clostridium botulinum (strain Loch Maree / Type A3).